The sequence spans 130 residues: Small ribosomal subunit protein uS9 (130 aa).

Belongs to the universal ribosomal protein uS9 family.

In Geobacillus thermodenitrificans (strain NG80-2), this protein is Small ribosomal subunit protein uS9.